A 61-amino-acid chain; its full sequence is Small ribosomal subunit protein uS14B (61 aa).

Residues cysteine 24, cysteine 27, cysteine 40, and cysteine 43 each contribute to the Zn(2+) site.

This sequence belongs to the universal ribosomal protein uS14 family. Zinc-binding uS14 subfamily. As to quaternary structure, part of the 30S ribosomal subunit. Contacts proteins S3 and S10. Zn(2+) serves as cofactor.

Its function is as follows. Binds 16S rRNA, required for the assembly of 30S particles and may also be responsible for determining the conformation of the 16S rRNA at the A site. The chain is Small ribosomal subunit protein uS14B from Streptococcus agalactiae serotype Ia (strain ATCC 27591 / A909 / CDC SS700).